A 348-amino-acid chain; its full sequence is MSDDGLVSAAASPEERAFEAGLRPRTLAEFVGQRKVREQLTIMLEGARARGRPPDHVLLSGPPGLGKTSLAMIMAQELEVPLRMTSGPAIERAGDLVAILTALSPGEVLFLDEIHRIARPAEELLYAAMEDFRVDVILGKGPGATAIPLDVSPFTLVGATTRSGLLTGPLRDRFGFTAHLDFYDADELARVLTRSAGLLGVTLTAEGAAEVAGRSRGTPRIANRLLRRVRDYAEVRADGVVTREIAQAALRIYDVDGLGLDRLDRAVLEALVTRFGGGPVGLTTLAVSVGEEPETVEDVAEPFLLRAGLLIRTARGRMATPAAFEHLGLDPVTDPLGRTQVSLFTEGE.

Residues 3-183 (DDGLVSAAAS…FGFTAHLDFY (181 aa)) are large ATPase domain (RuvB-L). ATP is bound by residues Leu22, Arg23, Gly64, Lys67, Thr68, Ser69, 130–132 (EDF), Arg173, Tyr183, and Arg220. Residue Thr68 coordinates Mg(2+). The small ATPAse domain (RuvB-S) stretch occupies residues 184–254 (DADELARVLT…IAQAALRIYD (71 aa)). Positions 257–348 (GLGLDRLDRA…TQVSLFTEGE (92 aa)) are head domain (RuvB-H). 2 residues coordinate DNA: Arg312 and Arg317.

Belongs to the RuvB family. In terms of assembly, homohexamer. Forms an RuvA(8)-RuvB(12)-Holliday junction (HJ) complex. HJ DNA is sandwiched between 2 RuvA tetramers; dsDNA enters through RuvA and exits via RuvB. An RuvB hexamer assembles on each DNA strand where it exits the tetramer. Each RuvB hexamer is contacted by two RuvA subunits (via domain III) on 2 adjacent RuvB subunits; this complex drives branch migration. In the full resolvosome a probable DNA-RuvA(4)-RuvB(12)-RuvC(2) complex forms which resolves the HJ.

It localises to the cytoplasm. It catalyses the reaction ATP + H2O = ADP + phosphate + H(+). Its function is as follows. The RuvA-RuvB-RuvC complex processes Holliday junction (HJ) DNA during genetic recombination and DNA repair, while the RuvA-RuvB complex plays an important role in the rescue of blocked DNA replication forks via replication fork reversal (RFR). RuvA specifically binds to HJ cruciform DNA, conferring on it an open structure. The RuvB hexamer acts as an ATP-dependent pump, pulling dsDNA into and through the RuvAB complex. RuvB forms 2 homohexamers on either side of HJ DNA bound by 1 or 2 RuvA tetramers; 4 subunits per hexamer contact DNA at a time. Coordinated motions by a converter formed by DNA-disengaged RuvB subunits stimulates ATP hydrolysis and nucleotide exchange. Immobilization of the converter enables RuvB to convert the ATP-contained energy into a lever motion, pulling 2 nucleotides of DNA out of the RuvA tetramer per ATP hydrolyzed, thus driving DNA branch migration. The RuvB motors rotate together with the DNA substrate, which together with the progressing nucleotide cycle form the mechanistic basis for DNA recombination by continuous HJ branch migration. Branch migration allows RuvC to scan DNA until it finds its consensus sequence, where it cleaves and resolves cruciform DNA. In Frankia casuarinae (strain DSM 45818 / CECT 9043 / HFP020203 / CcI3), this protein is Holliday junction branch migration complex subunit RuvB.